The following is a 265-amino-acid chain: Synaptoporin (265 aa).

Topologically, residues 1–4 are cytoplasmic; that stretch reads MCMV. The MARVEL domain occupies 1 to 202; it reads MCMVIFAPLF…NIWFVFKETG (202 aa). Residues 5 to 25 form a helical membrane-spanning segment; that stretch reads IFAPLFAIFAFATCGGYSGGL. Over 26 to 81 the chain is Vesicular; it reads RLSVDCVNKTESNLSIDIAFAYPFRLHQVTFEVPTCEGKERQKLALVGDSSSSAEF. N-linked (GlcNAc...) asparagine glycosylation is found at N33 and N38. The helical transmembrane segment at 82–102 threads the bilayer; sequence FVTVAVFAFLYSLAATVVYIF. Residues 103–114 are Cytoplasmic-facing; it reads FQNKYRENNRGP. A helical membrane pass occupies residues 115–135; it reads LIDFIVTVVFSFLWLVGSSAW. The Vesicular segment spans residues 136-177; that stretch reads AKGLSDVKVATDPKEVLLLMSACKQPSNKCMAVHSPVMSSLN. The N-linked (GlcNAc...) asparagine glycan is linked to N177. Residues 178 to 198 form a helical membrane-spanning segment; sequence TSVVFGFLNFILWAGNIWFVF. The Cytoplasmic segment spans residues 199 to 265; that stretch reads KETGWHSSGQ…SGPTSFNNQI (67 aa). The stretch at 210 to 214 is repeat 1; it reads YLSDP. Residues 210 to 242 are 5 X approximate repeats; sequence YLSDPMEKHSSSYNQGGYNQDSYGSSGGYSQQA. Phosphoserine is present on residues S212 and S220. The interval 221 to 265 is disordered; the sequence is SYNQGGYNQDSYGSSGGYSQQASLGPTSDEFGQQPSGPTSFNNQI. 4 consecutive repeat copies span residues 222–226, 227–231, 232–236, and 238–242. The segment covering 224-243 has biased composition (low complexity); it reads QGGYNQDSYGSSGGYSQQAS. Over residues 244–265 the composition is skewed to polar residues; the sequence is LGPTSDEFGQQPSGPTSFNNQI.

It belongs to the synaptophysin/synaptobrevin family. In terms of tissue distribution, central nervous system.

The protein localises to the cytoplasmic vesicle. Its subcellular location is the secretory vesicle. It localises to the synaptic vesicle membrane. It is found in the synapse. The protein resides in the synaptosome. Intrinsic membrane protein of small synaptic vesicles. Probable vesicular channel protein. The protein is Synaptoporin (Synpr) of Rattus norvegicus (Rat).